The primary structure comprises 876 residues: AP-1 complex subunit gamma-1 (876 aa).

9 HEAT repeats span residues 97–135 (DERQ…ICSA), 136–173 (EMAR…KVPD), 248–284 (FLHI…KTES), 308–345 (SLRV…FDDQ), 346–382 (AVQR…ENNV), 384–417 (QLTK…KFSP), 418–454 (EKLW…NASE), 506–545 (VTES…RFPS), and 560–599 (SLLL…ATFN). The region spanning 756 to 873 (PAYAPIVAYE…LEEGQVSNFP (118 aa)) is the GAE domain.

Belongs to the adaptor complexes large subunit family. Adaptor protein complex 1 (AP-1) is a heterotetramer composed of two large adaptins (gamma-type subunit and beta-type subunit), a medium adaptin (mu-type subunit) and a small adaptin (sigma-type subunit). Binds to EPSIN1. Interacts with DRP2A/ADL6 (via C-terminus).

It localises to the golgi apparatus. It is found in the cytoplasmic vesicle. The protein resides in the clathrin-coated vesicle membrane. Its function is as follows. Subunit of clathrin-associated adaptor protein complex 1 that plays a role in protein sorting at the trans-Golgi network and early endosomes (TGN/EE). The AP complexes mediate both the recruitment of clathrin to membranes and the recognition of sorting signals within the cytosolic tails of transmembrane cargo molecules. This chain is AP-1 complex subunit gamma-1 (GAMMA-ADR), found in Arabidopsis thaliana (Mouse-ear cress).